We begin with the raw amino-acid sequence, 154 residues long: Cytochrome c-type biogenesis protein CcmE (154 aa).

Residues 1 to 7 lie on the Cytoplasmic side of the membrane; sequence MKPRQKR. The helical; Signal-anchor for type II membrane protein transmembrane segment at 8–28 threads the bilayer; that stretch reads LVLIVGIVAAVGVAAALVLNA. At 29 to 154 the chain is on the periplasmic side; the sequence is FQSNLVFFYS…GETVVKETRP (126 aa). Residues His121 and Tyr125 each coordinate heme. The disordered stretch occupies residues 131 to 154; the sequence is AEALQRAGASNQKLGETVVKETRP.

The protein belongs to the CcmE/CycJ family.

It is found in the cell inner membrane. In terms of biological role, heme chaperone required for the biogenesis of c-type cytochromes. Transiently binds heme delivered by CcmC and transfers the heme to apo-cytochromes in a process facilitated by CcmF and CcmH. In Methylibium petroleiphilum (strain ATCC BAA-1232 / LMG 22953 / PM1), this protein is Cytochrome c-type biogenesis protein CcmE.